Reading from the N-terminus, the 342-residue chain is Phosphate acyltransferase (342 aa).

It belongs to the PlsX family. As to quaternary structure, homodimer. Probably interacts with PlsY.

The protein localises to the cytoplasm. The catalysed reaction is a fatty acyl-[ACP] + phosphate = an acyl phosphate + holo-[ACP]. It participates in lipid metabolism; phospholipid metabolism. In terms of biological role, catalyzes the reversible formation of acyl-phosphate (acyl-PO(4)) from acyl-[acyl-carrier-protein] (acyl-ACP). This enzyme utilizes acyl-ACP as fatty acyl donor, but not acyl-CoA. The sequence is that of Phosphate acyltransferase from Legionella pneumophila (strain Corby).